The following is a 157-amino-acid chain: Transcriptional repressor NrdR (157 aa).

A disordered region spans residues 1–22; it reads MRCPKCGATKSSVIDSRQAEEG. Residues 3–34 fold into a zinc finger; it reads CPKCGATKSSVIDSRQAEEGNTIRRRRECDEC. In terms of domain architecture, ATP-cone spans 49 to 139; the sequence is LVVVKKDGTR…VYRSFKDVSE (91 aa).

Belongs to the NrdR family. It depends on Zn(2+) as a cofactor.

Functionally, negatively regulates transcription of bacterial ribonucleotide reductase nrd genes and operons by binding to NrdR-boxes. This chain is Transcriptional repressor NrdR, found in Streptococcus pneumoniae (strain Hungary19A-6).